The sequence spans 110 residues: Large ribosomal subunit protein uL22 (110 aa).

Belongs to the universal ribosomal protein uL22 family. Part of the 50S ribosomal subunit.

Its function is as follows. This protein binds specifically to 23S rRNA; its binding is stimulated by other ribosomal proteins, e.g. L4, L17, and L20. It is important during the early stages of 50S assembly. It makes multiple contacts with different domains of the 23S rRNA in the assembled 50S subunit and ribosome. Functionally, the globular domain of the protein is located near the polypeptide exit tunnel on the outside of the subunit, while an extended beta-hairpin is found that lines the wall of the exit tunnel in the center of the 70S ribosome. The sequence is that of Large ribosomal subunit protein uL22 from Janthinobacterium sp. (strain Marseille) (Minibacterium massiliensis).